We begin with the raw amino-acid sequence, 417 residues long: Guanine nucleotide-exchange factor SEC12 (417 aa).

At methionine 1–serine 388 the chain is on the cytoplasmic side. Position 10 is a 3'-nitrotyrosine (tyrosine 10). Positions lysine 101 to glutamate 135 are disordered. A compositionally biased stretch (basic and acidic residues) spans serine 103 to proline 115. 3 WD repeats span residues serine 152–glutamate 191, alanine 194–glutamine 232, and cysteine 298–tyrosine 337. The chain crosses the membrane as a helical span at residues valine 389–leucine 409. At glutamine 410 to leucine 417 the chain is on the lumenal side.

Interacts with SAR1B (GDP-bound form). Interacts with MIA2; recruits PREB to endoplasmic reticulum exit sites. Interacts with CIDEB; facilitating loading of SCAP-SREBP into COPII vesicles.

The protein localises to the endoplasmic reticulum membrane. It localises to the nucleus. Its function is as follows. Guanine nucleotide exchange factor (GEF) that regulates the assembly of the coat protein complex II/COPII in endoplasmic reticulum (ER) to Golgi vesicle-mediated transport. Selectively activates SAR1A and SAR1B by promoting the exchange of guanosine diphosphate (GDP) for guanosine triphosphate (GTP) in these small GTPases. In their activated GTP-bound state, SAR1A and SAR1B insert into the membrane of the endoplasmic reticulum where they recruit the remainder of the coat protein complex II/COPII which is responsible for both the sorting of proteins and the deformation and budding of membranes into vesicles destined to the Golgi. In terms of biological role, was first identified based on its probable role in the regulation of pituitary gene transcription. Binds to the prolactin gene (PRL) promoter and seems to activate transcription. The polypeptide is Guanine nucleotide-exchange factor SEC12 (Mus musculus (Mouse)).